The sequence spans 221 residues: GTP cyclohydrolase 1 (221 aa).

Zn(2+) contacts are provided by Cys-109, His-112, and Cys-180.

The protein belongs to the GTP cyclohydrolase I family. In terms of assembly, toroid-shaped homodecamer, composed of two pentamers of five dimers.

The enzyme catalyses GTP + H2O = 7,8-dihydroneopterin 3'-triphosphate + formate + H(+). It participates in cofactor biosynthesis; 7,8-dihydroneopterin triphosphate biosynthesis; 7,8-dihydroneopterin triphosphate from GTP: step 1/1. This Sodalis glossinidius (strain morsitans) protein is GTP cyclohydrolase 1.